A 469-amino-acid chain; its full sequence is D-3-phosphoglycerate dehydrogenase 2 (469 aa).

An N-acetylserine modification is found at Ser-2. Phosphoserine occurs at positions 22, 29, and 33. Residues 208-209, Asp-228, 285-287, and Asp-311 contribute to the NAD(+) site; these read HI and ASR. Residue Arg-287 is part of the active site. Glu-316 is a catalytic residue. The active-site Proton donor is the His-347. Position 347–350 (347–350) interacts with NAD(+); that stretch reads HIGG. One can recognise an ACT domain in the interval 399-469; the sequence is RVLYIHRNVP…SAKVSIRLLY (71 aa).

This sequence belongs to the D-isomer specific 2-hydroxyacid dehydrogenase family.

It carries out the reaction (2R)-3-phosphoglycerate + NAD(+) = 3-phosphooxypyruvate + NADH + H(+). The catalysed reaction is (R)-2-hydroxyglutarate + NAD(+) = 2-oxoglutarate + NADH + H(+). Its pathway is amino-acid biosynthesis; L-serine biosynthesis; L-serine from 3-phospho-D-glycerate: step 1/3. Functionally, catalyzes the reversible oxidation of 3-phospho-D-glycerate to 3-phosphonooxypyruvate, the first step of the phosphorylated L-serine biosynthesis pathway. Also catalyzes the reversible oxidation of 2-hydroxyglutarate to 2-oxoglutarate. This Saccharomyces cerevisiae (strain ATCC 204508 / S288c) (Baker's yeast) protein is D-3-phosphoglycerate dehydrogenase 2 (SER33).